The sequence spans 226 residues: uncharacterized protein (226 aa).

The stretch at 121 to 163 forms a coiled coil; the sequence is TVDELIKTIEKELNKVKKSRKNREKKTNEVEEIIEELIEEDDI.

This is an uncharacterized protein from Methanocaldococcus jannaschii (strain ATCC 43067 / DSM 2661 / JAL-1 / JCM 10045 / NBRC 100440) (Methanococcus jannaschii).